The following is a 141-amino-acid chain: Endoribonuclease YbeY (141 aa).

Residues His-101, His-105, and His-111 each coordinate Zn(2+).

Belongs to the endoribonuclease YbeY family. Zn(2+) serves as cofactor.

Its subcellular location is the cytoplasm. Functionally, single strand-specific metallo-endoribonuclease involved in late-stage 70S ribosome quality control and in maturation of the 3' terminus of the 16S rRNA. The sequence is that of Endoribonuclease YbeY from Nitrosomonas eutropha (strain DSM 101675 / C91 / Nm57).